The primary structure comprises 290 residues: Putative transport permease ycf38 (290 aa).

7 helical membrane passes run 21-41, 46-66, 86-106, 133-153, 167-187, 194-213, and 261-281; these read VTSFFFIQELFVLVKRLFIQL, ITLISGILQPLLWLILFGALF, PGILVFTAFAGSLNSSLPLIF, FFISVLSFIQVFFIMLFGVFL, FFFLFLLIIGITTFSILLALL, LIAVIFVLNLPLLFSSTALA, and INIGQSLIILIIFDLVGFLLF. In terms of domain architecture, ABC transmembrane type-2 spans 46–284; it reads ITLISGILQP…LVGFLLFKKI (239 aa).

It belongs to the ABC-2 integral membrane protein family.

The protein resides in the plastid. Its subcellular location is the cyanelle membrane. The protein is Putative transport permease ycf38 (ycf38) of Cyanophora paradoxa.